Consider the following 260-residue polypeptide: Ditrans,polycis-undecaprenyl-diphosphate synthase ((2E,6E)-farnesyl-diphosphate specific) (260 aa).

Asp20 is an active-site residue. Asp20 contributes to the Mg(2+) binding site. Residues 21-24 (GNGR), Trp25, Arg33, His37, and 65-67 (SSE) each bind substrate. The active-site Proton acceptor is the Asn68. Residues Trp69, Arg71, and Arg188 each contribute to the substrate site. Mg(2+) is bound at residue His193. 194 to 196 (RIS) is a binding site for substrate. Glu207 is a binding site for Mg(2+).

Belongs to the UPP synthase family. Homodimer. Mg(2+) serves as cofactor.

The enzyme catalyses 8 isopentenyl diphosphate + (2E,6E)-farnesyl diphosphate = di-trans,octa-cis-undecaprenyl diphosphate + 8 diphosphate. Functionally, catalyzes the sequential condensation of isopentenyl diphosphate (IPP) with (2E,6E)-farnesyl diphosphate (E,E-FPP) to yield (2Z,6Z,10Z,14Z,18Z,22Z,26Z,30Z,34E,38E)-undecaprenyl diphosphate (di-trans,octa-cis-UPP). UPP is the precursor of glycosyl carrier lipid in the biosynthesis of bacterial cell wall polysaccharide components such as peptidoglycan and lipopolysaccharide. The chain is Ditrans,polycis-undecaprenyl-diphosphate synthase ((2E,6E)-farnesyl-diphosphate specific) from Wigglesworthia glossinidia brevipalpis.